A 111-amino-acid chain; its full sequence is Cytochrome c (111 aa).

At A1 the chain carries N-acetylalanine. 3 residues coordinate heme c: C22, C25, and H26. An N6,N6,N6-trimethyllysine modification is found at K80. M88 is a binding site for heme c. At K94 the chain carries N6,N6,N6-trimethyllysine.

This sequence belongs to the cytochrome c family. In terms of processing, binds 1 heme c group covalently per subunit.

It localises to the mitochondrion intermembrane space. Functionally, electron carrier protein. The oxidized form of the cytochrome c heme group can accept an electron from the heme group of the cytochrome c1 subunit of cytochrome reductase. Cytochrome c then transfers this electron to the cytochrome oxidase complex, the final protein carrier in the mitochondrial electron-transport chain. The sequence is that of Cytochrome c from Cannabis sativa (Hemp).